The following is a 362-amino-acid chain: Protein RecA (362 aa).

An ATP-binding site is contributed by 77-84 (GPESSGKT).

This sequence belongs to the RecA family.

Its subcellular location is the cytoplasm. In terms of biological role, can catalyze the hydrolysis of ATP in the presence of single-stranded DNA, the ATP-dependent uptake of single-stranded DNA by duplex DNA, and the ATP-dependent hybridization of homologous single-stranded DNAs. It interacts with LexA causing its activation and leading to its autocatalytic cleavage. This Rhizobium leguminosarum bv. trifolii (strain WSM2304) protein is Protein RecA.